A 627-amino-acid polypeptide reads, in one-letter code: MIFLATLPLFWIMISASRGGHWGAWMPSTISAFEGTCVSIPCRFDFPDELRPAVVHGVWYFNSPYPKNYPPVVFKSRTQVVHESFQGRSRLLGDLGLRNCTLLLSTLSPELGGKYYFRGDLGGYNQYTFSEHSVLDIVNTPNIVVPPEVVAGTEVEVSCMVPDNCPELRPELSWLGHEGLGEPTVLGRLREDEGTWVQVSLLHFVPTREANGHRLGCQAAFPNTTLQFEGYASLDVKYPPVIVEMNSSVEAIEGSHVSLLCGADSNPPPLLTWMRDGMVLREAVAKSLYLDLEEVTPGEDGVYACLAENAYGQDNRTVELSVMYAPWKPTVNGTVVAVEGETVSILCSTQSNPDPILTIFKEKQILATVIYESQLQLELPAVTPEDDGEYWCVAENQYGQRATAFNLSVEFAPIILLESHCAAARDTVQCLCVVKSNPEPSVAFELPSRNVTVNETEREFVYSERSGLLLTSILTIRGQAQAPPRVICTSRNLYGTQSLELPFQGAHRLMWAKIGPVGAVVAFAILIAIVCYITQTRRKKNVTESSSFSGGDNPHVLYSPEFRISGAPDKYESEKQRLGSERRLLGLRGESPELDLSYSHSDLGKRPTKDSYTLTEELAEYAEIRVK.

A signal peptide spans 1-19 (MIFLATLPLFWIMISASRG). The segment at 20 to 325 (GHWGAWMPST…RTVELSVMYA (306 aa)) is interaction with RTN4R and RTN4RL2. Over 20 to 516 (GHWGAWMPST…HRLMWAKIGP (497 aa)) the chain is Extracellular. C-linked (Man) tryptophan glycosylation occurs at W22. The Ig-like V-type domain occupies 22 to 120 (WGAWMPSTIS…LGGKYYFRGD (99 aa)). Intrachain disulfides connect C37-C165, C42-C100, and C159-C217. 65-67 (YPK) lines the a ganglioside GT1b (d18:1(4E)) pocket. A glycan (N-linked (GlcNAc...) asparagine) is linked at N99. A ganglioside GT1b (d18:1(4E))-binding positions include R118 and 124–128 (YNQYT). 4 Ig-like C2-type domains span residues 139–237 (NTPN…LDVK), 241–325 (VIVE…VMYA), 327–412 (WKPT…VEFA), and 413–508 (PIIL…GAHR). N223 and N246 each carry an N-linked (GlcNAc...) asparagine glycan. A disulfide bridge links C261 with C305. N-linked (GlcNAc...) asparagine glycans are attached at residues N315 and N332. C347 and C392 are joined by a disulfide. Residue N406 is glycosylated (N-linked (GlcNAc...) asparagine). Intrachain disulfides connect C421/C430 and C432/C488. N-linked (GlcNAc...) asparagine glycosylation is found at N450 and N454. The chain crosses the membrane as a helical span at residues 517–536 (VGAVVAFAILIAIVCYITQT). Residue C531 is the site of S-palmitoyl cysteine attachment. Residues 537–627 (RRKKNVTESS…LAEYAEIRVK (91 aa)) lie on the Cytoplasmic side of the membrane. Phosphoserine occurs at positions 545, 547, 549, and 591. The segment at 578–627 (LGSERRLLGLRGESPELDLSYSHSDLGKRPTKDSYTLTEELAEYAEIRVK) is required for normal axon myelination in the central nervous system.

It belongs to the immunoglobulin superfamily. SIGLEC (sialic acid binding Ig-like lectin) family. In terms of assembly, monomer and homodimer. Interacts (via the first three N-terminal Ig-like domains) with RTN4R and RTN4RL2. Interacts with isoform 2 of BSG. N-glycosylated. In terms of processing, phosphorylated on tyrosine residues. Post-translationally, ubiquitinated, leading to proteasomal degradation. In terms of tissue distribution, detected in the myelin tract in brain, especially in the corpus callosum and in peripheral nerve. Expressed by myelinating glial cells in the central and peripheral nervous system. Detected in oligodendrocyte processes before formation of compact myelin. Restricted to the periaxonal space after myelination. Isoform S-MAG is the predominant isoform in CNS and PNS of the adult (at protein level).

The protein resides in the cell membrane. It localises to the membrane raft. In terms of biological role, adhesion molecule that mediates interactions between myelinating cells and neurons by binding to neuronal sialic acid-containing gangliosides and to the glycoproteins RTN4R and RTN4RL2. Not required for initial myelination, but seems to play a role in the maintenance of normal axon myelination. Protects motoneurons against apoptosis, also after injury; protection against apoptosis is probably mediated via interaction with neuronal RTN4R and RTN4RL2. Required to prevent degeneration of myelinated axons in adults; this probably depends on binding to gangliosides on the axon cell membrane. Negative regulator of neurite outgrowth that inhibits axon longitudinal growth. Negative regulator of neurite outgrowth; in dorsal root ganglion neurons the inhibition is mediated primarily via binding to neuronal RTN4R or RTN4RL2 and to a lesser degree via binding to neuronal gangliosides. In cerebellar granule cells the inhibition is mediated via binding to neuronal gangliosides. In sensory neurons, inhibition of neurite extension depends only partially on RTN4R, RTN4RL2 and gangliosides. Inhibits axon outgrowth by binding to RTN4R. Preferentially binds to alpha-2,3-linked sialic acid. Binds ganglioside Gt1b. The sequence is that of Myelin-associated glycoprotein (Mag) from Mus musculus (Mouse).